Consider the following 38-residue polypeptide: Putative defensin-like protein 105 (38 aa).

Intrachain disulfides connect Cys5/Cys27, Cys13/Cys33, and Cys17/Cys34.

Belongs to the DEFL family.

This chain is Putative defensin-like protein 105, found in Arabidopsis thaliana (Mouse-ear cress).